The following is a 462-amino-acid chain: EPD1-interacting receptor-like cytoplasmic serine/threonine-protein kinase 5A (462 aa).

Residues 85–366 (FSSANFLGEG…DVVNILEPLL (282 aa)) enclose the Protein kinase domain. ATP-binding positions include 91-99 (LGEGGFGPV) and lysine 120. 2 positions are modified to phosphotyrosine: tyrosine 165 and tyrosine 167. Aspartate 215 acts as the Proton acceptor in catalysis.

The protein belongs to the protein kinase superfamily. Ser/Thr protein kinase family. Interacts with the Verticillium dahliae elicitor EPD1 (AC G2WWH6). In terms of processing, phosphorylated at Tyr-165 and Tyr-167 in the presence of pathogen-associated molecular patterns (PAMPs); this triggers the expression of pathogenesis-related genes (e.g. PR5 and PR16). Mostly expressed in roots and, to a lesser extent, in leaves.

The protein localises to the cell membrane. The catalysed reaction is L-seryl-[protein] + ATP = O-phospho-L-seryl-[protein] + ADP + H(+). The enzyme catalyses L-threonyl-[protein] + ATP = O-phospho-L-threonyl-[protein] + ADP + H(+). Functionally, required for pathogen-associated molecular pattern (PAMP, e.g. chitin and flg22)-triggered immunity (PTI) involving reactive oxygen species (ROS) accumulation and triggering plant defense, including defense-related gene expression (e.g. PR1 and LOX). Ensures specific recognition of the EPD1 effector of Verticillium dahliae, resulting in a hypersensitive response known as effector-triggered immunity (ETI), characterized by the activation of programmed cell death to limit infection by the pathogen. Priming plants with the incompatible pathogen V.dahliae leads to an increased resistance to compatible pathogens, as a result of systemic acquired resistance (SAR). This is EPD1-interacting receptor-like cytoplasmic serine/threonine-protein kinase 5A from Gossypium barbadense (Sea Island cotton).